Here is an 875-residue protein sequence, read N- to C-terminus: Probable dipeptidyl-aminopeptidase B (875 aa).

A disordered region spans residues 1 to 90 (MSEPKPIQDT…ASSETTPPRK (90 aa)). The Cytoplasmic segment spans residues 1 to 98 (MSEPKPIQDT…RKGVDRKLKK (98 aa)). Low complexity predominate over residues 19 to 28 (SSISSASTTS). The segment covering 33–46 (RLAEESEKNHDASS) has biased composition (basic and acidic residues). Residues 99-119 (VLLIVGGFFVAAWIVSLVVFL) form a helical; Signal-anchor for type II membrane protein membrane-spanning segment. Topologically, residues 120–875 (TNKSYKHGSQ…VNDAKPKIES (756 aa)) are vacuolar. N-linked (GlcNAc...) asparagine glycans are attached at residues asparagine 354 and asparagine 567. Residues 689-715 (VDFQSSDGGRRTTRSPRRATGRPSATS) form a disordered region. Residues 699–708 (RTTRSPRRAT) show a composition bias toward basic residues. The Charge relay system role is filled by serine 726. An N-linked (GlcNAc...) asparagine glycan is attached at asparagine 785. Active-site charge relay system residues include aspartate 803 and histidine 836.

Belongs to the peptidase S9B family.

It localises to the vacuole membrane. The catalysed reaction is Release of an N-terminal dipeptide, Xaa-Yaa-|-Zaa-, from a polypeptide, preferentially when Yaa is Pro, provided Zaa is neither Pro nor hydroxyproline.. Its function is as follows. Type IV dipeptidyl-peptidase which removes N-terminal dipeptides sequentially from polypeptides having unsubstituted N-termini provided that the penultimate residue is proline. The sequence is that of Probable dipeptidyl-aminopeptidase B (DAPB) from Verticillium alfalfae (strain VaMs.102 / ATCC MYA-4576 / FGSC 10136) (Verticillium wilt of alfalfa).